Consider the following 804-residue polypeptide: Probable phosphoketolase (804 aa).

Belongs to the XFP family. Requires thiamine diphosphate as cofactor.

This chain is Probable phosphoketolase, found in Mycolicibacterium paratuberculosis (strain ATCC BAA-968 / K-10) (Mycobacterium paratuberculosis).